The sequence spans 423 residues: MEGLSPGQGNNTTSSEGPFGTRGNATGISDVTFSYQVITSLLLGTLIFCAVLGNACVVAAIALERSLQNVANYLIGSLAVTDLMVSVLVLPMAALYQVLNKWTLGQVTCDLFIALDVLCCTSSILHLCAIALDRYWAITDPIDYVNKRTPRRAAALISLTWLIGFLISIPPMLGWRTPEDRSDPDACTISKDHGYTIYSTFGAFYIPLLLMLVLYGRIFRAARFRIRKTVKKAERKGADARSGVSPAPQPRKSVNGEPGGREWRQGPGSKAGGPLCTNGAVRRGDDGAALEVIEVHRVGSSKEHLPLPSEAGAIPCAPASFEKKNERNAEAKRKMALARERKTVKTLGIIMGTFILCWLPFFIVALVLPFCESSCHMPTLLGAIINWLGYSNSLLNPVIYAYFNKDFQNAFKKIVRCKFCRRR.

Positions 1–20 are disordered; the sequence is MEGLSPGQGNNTTSSEGPFG. Topologically, residues 1–38 are extracellular; it reads MEGLSPGQGNNTTSSEGPFGTRGNATGISDVTFSYQVI. Polar residues predominate over residues 7-16; it reads GQGNNTTSSE. Asn10, Asn11, and Asn24 each carry an N-linked (GlcNAc...) asparagine glycan. A helical membrane pass occupies residues 39 to 59; it reads TSLLLGTLIFCAVLGNACVVA. The Cytoplasmic segment spans residues 60 to 73; the sequence is AIALERSLQNVANY. Residues 74–98 form a helical membrane-spanning segment; that stretch reads LIGSLAVTDLMVSVLVLPMAALYQV. Over 99 to 107 the chain is Extracellular; it reads LNKWTLGQV. Residues 108–132 traverse the membrane as a helical segment; that stretch reads TCDLFIALDVLCCTSSILHLCAIAL. Cys109 and Cys187 form a disulfide bridge. Asp116 and Cys120 together coordinate serotonin. A DRY motif; important for ligand-induced conformation changes motif is present at residues 133–135; sequence DRY. Residues 133 to 152 are Cytoplasmic-facing; sequence DRYWAITDPIDYVNKRTPRR. A helical membrane pass occupies residues 153 to 174; sequence AAALISLTWLIGFLISIPPMLG. Residues 175-193 are Extracellular-facing; that stretch reads WRTPEDRSDPDACTISKDH. The helical transmembrane segment at 194 to 216 threads the bilayer; it reads GYTIYSTFGAFYIPLLLMLVLYG. At 217 to 346 the chain is on the cytoplasmic side; it reads RIFRAARFRI…LARERKTVKT (130 aa). The disordered stretch occupies residues 235–277; sequence RKGADARSGVSPAPQPRKSVNGEPGGREWRQGPGSKAGGPLCT. Residues Lys345, Thr346, and Gly352 each coordinate 1D-myo-inositol 4-phosphate. A helical transmembrane segment spans residues 347–370; the sequence is LGIIMGTFILCWLPFFIVALVLPF. The Extracellular portion of the chain corresponds to 371 to 378; that stretch reads CESSCHMP. The chain crosses the membrane as a helical span at residues 379-403; sequence TLLGAIINWLGYSNSLLNPVIYAYF. The NPxxY motif; important for ligand-induced conformation changes and signaling signature appears at 396–400; the sequence is NPVIY. 1D-myo-inositol 4-phosphate is bound by residues Phe403, Asn404, and Lys405. Residues 404 to 423 are Cytoplasmic-facing; that stretch reads NKDFQNAFKKIVRCKFCRRR.

The protein belongs to the G-protein coupled receptor 1 family. 5-hydroxytryptamine receptor subfamily. HTR1A sub-subfamily. As to quaternary structure, heterodimer; heterodimerizes with GPER1. Interacts with YIF1B. Interacts with GPR39 and GALR1.

It is found in the cell membrane. The protein localises to the cell projection. Its subcellular location is the dendrite. G-protein coupled receptor activity is regulated by lipids: phosphatidylinositol 4-phosphate increases HTR1A-mediated activity. G-protein coupled receptor for 5-hydroxytryptamine (serotonin). Also functions as a receptor for various drugs and psychoactive substances. Ligand binding causes a conformation change that triggers signaling via guanine nucleotide-binding proteins (G proteins) and modulates the activity of downstream effectors, such as adenylate cyclase. HTR1A is coupled to G(i)/G(o) G alpha proteins and mediates inhibitory neurotransmission: signaling inhibits adenylate cyclase activity and activates a phosphatidylinositol-calcium second messenger system that regulates the release of Ca(2+) ions from intracellular stores. Beta-arrestin family members regulate signaling by mediating both receptor desensitization and resensitization processes. The protein is 5-hydroxytryptamine receptor 1A (HTR1A) of Vulpes vulpes (Red fox).